The primary structure comprises 148 residues: Helix-loop-helix protein 14 (148 aa).

Disordered stretches follow at residues 1 to 21 (MAKK…HQVN), 63 to 83 (DPQQ…NSNN), and 112 to 132 (GDVS…SYSP). The segment at 4 to 17 (KNQVARNERERKRV) is basic motif. The 53-residue stretch at 4-56 (KNQVARNERERKRVHQVNHGFDVLRNRLQPKNHTKKWSKADTLREAVKYIQQL) folds into the bHLH domain. Residues 18–56 (HQVNHGFDVLRNRLQPKNHTKKWSKADTLREAVKYIQQL) form a helix-loop-helix motif region. Positions 63 to 78 (DPQQPSVSSSTPDYTM) are enriched in polar residues. Residues 120–132 (SPTSSVSSSSYSP) are compositionally biased toward low complexity.

It localises to the nucleus. In terms of biological role, probable transcription factor, involved in determining neuroblast cell fate, morphogenesis and aspects of terminal differentiation in both left/right symmetric and asymmetric neuronal lineages. The chain is Helix-loop-helix protein 14 from Caenorhabditis elegans.